Reading from the N-terminus, the 140-residue chain is MSSRSIMGFDYGTKSIGVAIGQELTGTGQPLRAIKANDGIPNWDDIDKLLKEWQPDLLVVGLPLNMDGTEQEITVRARKFGNRLHGRFWQAVEFKDERLTTTDARARLFERGGYRALEKGSVDGVSAQLILEAWMEEQYG.

It belongs to the YqgF nuclease family.

It is found in the cytoplasm. Could be a nuclease involved in processing of the 5'-end of pre-16S rRNA. This Aeromonas hydrophila protein is Putative pre-16S rRNA nuclease.